The following is an 85-amino-acid chain: Large ribosomal subunit protein bL27 (85 aa).

The disordered stretch occupies residues 1–27; it reads MAHKKAGGSTKNGRDSQSKRLGVKRYG.

This sequence belongs to the bacterial ribosomal protein bL27 family.

The polypeptide is Large ribosomal subunit protein bL27 (Halorhodospira halophila (strain DSM 244 / SL1) (Ectothiorhodospira halophila (strain DSM 244 / SL1))).